Reading from the N-terminus, the 265-residue chain is NAD kinase (265 aa).

Residue Asp-45 is the Proton acceptor of the active site. NAD(+) contacts are provided by residues 45-46, 122-123, Arg-148, Asp-150, 161-166, and Ala-185; these read DG, NE, and TAYSKS.

Belongs to the NAD kinase family. The cofactor is a divalent metal cation.

Its subcellular location is the cytoplasm. It carries out the reaction NAD(+) + ATP = ADP + NADP(+) + H(+). Its function is as follows. Involved in the regulation of the intracellular balance of NAD and NADP, and is a key enzyme in the biosynthesis of NADP. Catalyzes specifically the phosphorylation on 2'-hydroxyl of the adenosine moiety of NAD to yield NADP. This Lactobacillus delbrueckii subsp. bulgaricus (strain ATCC 11842 / DSM 20081 / BCRC 10696 / JCM 1002 / NBRC 13953 / NCIMB 11778 / NCTC 12712 / WDCM 00102 / Lb 14) protein is NAD kinase.